Consider the following 113-residue polypeptide: Large ribosomal subunit protein uL24 (113 aa).

It belongs to the universal ribosomal protein uL24 family. As to quaternary structure, part of the 50S ribosomal subunit.

Its function is as follows. One of two assembly initiator proteins, it binds directly to the 5'-end of the 23S rRNA, where it nucleates assembly of the 50S subunit. Functionally, one of the proteins that surrounds the polypeptide exit tunnel on the outside of the subunit. The sequence is that of Large ribosomal subunit protein uL24 (rplX) from Fusobacterium nucleatum subsp. nucleatum (strain ATCC 25586 / DSM 15643 / BCRC 10681 / CIP 101130 / JCM 8532 / KCTC 2640 / LMG 13131 / VPI 4355).